Consider the following 241-residue polypeptide: Phosphatidylcholine synthase (241 aa).

Residues 1–15 (MKIFNYKRVPYAEIR) are Cytoplasmic-facing. A helical membrane pass occupies residues 16–36 (AFSVHILTASGSFLAFLGVVA). At 37–41 (ASEHR) the chain is on the periplasmic side. The chain crosses the membrane as a helical span at residues 42–62 (FVDMFWWLGLALLVDGIDGPI). Residues 63–76 (ARKVRVKEVLPNWS) are Cytoplasmic-facing. A helical transmembrane segment spans residues 77–97 (GDTLDNIIDYVTYVLLPAFAL). Topologically, residues 98–100 (YQS) are periplasmic. The chain crosses the membrane as a helical span at residues 101 to 121 (GMIGEPLSFVAAGMIVVSSAI). Topologically, residues 122–133 (YYADMGMKTDEY) are cytoplasmic. A helical transmembrane segment spans residues 134 to 154 (FFSGFPVVWNMVVFTLFVMDA). At 155–159 (SATTA) the chain is on the periplasmic side. The chain crosses the membrane as a helical span at residues 160 to 180 (MTVVTVSVFLTFLPINFLHPV). Topologically, residues 181–187 (RVKRLRP) are cytoplasmic. Residues 188–208 (LNLLVVAIWCALGGYALLMHF) traverse the membrane as a helical segment. Residues 209–214 (ETPTWA) are Periplasmic-facing. The chain crosses the membrane as a helical span at residues 215–235 (VIAFVASGIYLYCIGGILQFF). At 236-241 (PSLGAK) the chain is on the cytoplasmic side.

This sequence belongs to the CDP-alcohol phosphatidyltransferase class-I family. Mn(2+) is required as a cofactor.

The protein resides in the cell inner membrane. It carries out the reaction a CDP-1,2-diacyl-sn-glycerol + choline = a 1,2-diacyl-sn-glycero-3-phosphocholine + CMP + H(+). Its function is as follows. Condenses choline with CDP-diglyceride to produce phosphatidylcholine and CMP. Affects motility, biofilm formation and virulence of this bacterium when there is a complete loss of phosphatidylcholine formation due to absence of both the synthase (pcs) and the methylation (pmtA) pathways. This is Phosphatidylcholine synthase from Agrobacterium fabrum (strain C58 / ATCC 33970) (Agrobacterium tumefaciens (strain C58)).